Reading from the N-terminus, the 557-residue chain is Dihydroxy-acid dehydratase (557 aa).

Position 50 (cysteine 50) interacts with [2Fe-2S] cluster. Residue aspartate 82 participates in Mg(2+) binding. Residue cysteine 123 coordinates [2Fe-2S] cluster. Residues aspartate 124 and lysine 125 each coordinate Mg(2+). Lysine 125 carries the post-translational modification N6-carboxylysine. Position 195 (cysteine 195) interacts with [2Fe-2S] cluster. Residue glutamate 447 participates in Mg(2+) binding. Residue serine 473 is the Proton acceptor of the active site.

The protein belongs to the IlvD/Edd family. In terms of assembly, homodimer. The cofactor is [2Fe-2S] cluster. Mg(2+) serves as cofactor.

It carries out the reaction (2R)-2,3-dihydroxy-3-methylbutanoate = 3-methyl-2-oxobutanoate + H2O. It catalyses the reaction (2R,3R)-2,3-dihydroxy-3-methylpentanoate = (S)-3-methyl-2-oxopentanoate + H2O. Its pathway is amino-acid biosynthesis; L-isoleucine biosynthesis; L-isoleucine from 2-oxobutanoate: step 3/4. The protein operates within amino-acid biosynthesis; L-valine biosynthesis; L-valine from pyruvate: step 3/4. Its function is as follows. Functions in the biosynthesis of branched-chain amino acids. Catalyzes the dehydration of (2R,3R)-2,3-dihydroxy-3-methylpentanoate (2,3-dihydroxy-3-methylvalerate) into 2-oxo-3-methylpentanoate (2-oxo-3-methylvalerate) and of (2R)-2,3-dihydroxy-3-methylbutanoate (2,3-dihydroxyisovalerate) into 2-oxo-3-methylbutanoate (2-oxoisovalerate), the penultimate precursor to L-isoleucine and L-valine, respectively. The sequence is that of Dihydroxy-acid dehydratase from Nitrosomonas eutropha (strain DSM 101675 / C91 / Nm57).